We begin with the raw amino-acid sequence, 115 residues long: U3-lycotoxin-Ls1k (115 aa).

A signal peptide spans 1–20 (MKSVLLFGVLLVTLFSYSSA). Positions 21-44 (EMLDDFDQADEDELLSLIEKEEAR) are excised as a propeptide. Intrachain disulfides connect Cys48–Cys63, Cys55–Cys72, Cys62–Cys87, and Cys74–Cys85.

This sequence belongs to the neurotoxin 19 (CSTX) family. 01 subfamily. In terms of tissue distribution, expressed by the venom gland.

The protein resides in the secreted. The polypeptide is U3-lycotoxin-Ls1k (Lycosa singoriensis (Wolf spider)).